Reading from the N-terminus, the 31-residue chain is Cyclotide mech-5 (31 aa).

The cyclopeptide (Gly-Asp) cross-link spans 1–31 (GVIPCGESCVFIPCISSVVGCTCKNKVCYRD). Cystine bridges form between Cys-5-Cys-21, Cys-9-Cys-23, and Cys-14-Cys-28.

Post-translationally, this is a cyclic peptide. In terms of processing, contains 3 disulfide bonds.

Its function is as follows. Probably participates in a plant defense mechanism (Potential). Binds to and induces leakage in phospholipd membranes, particularly ones containing 1-palmitoyl-2-oleophosphatidylethanolamine (POPE). This Melicytus chathamicus (Chatham Island mahoe) protein is Cyclotide mech-5.